Consider the following 276-residue polypeptide: Orotidine 5'-phosphate decarboxylase (276 aa).

The active-site Proton donor is K95.

The protein belongs to the OMP decarboxylase family. Type 2 subfamily.

It carries out the reaction orotidine 5'-phosphate + H(+) = UMP + CO2. It functions in the pathway pyrimidine metabolism; UMP biosynthesis via de novo pathway; UMP from orotate: step 2/2. The chain is Orotidine 5'-phosphate decarboxylase (pyrF) from Mycolicibacterium smegmatis (strain ATCC 700084 / mc(2)155) (Mycobacterium smegmatis).